The following is a 254-amino-acid chain: Major prion protein (254 aa).

The N-terminal stretch at 1 to 22 (MANLSYWLLALFVATWTDVGLC) is a signal peptide. An interaction with GRB2, ERI3 and SYN1 region spans residues 23 to 231 (KKRPKPGGWN…SQAYYDGRRS (209 aa)). Residues 25–104 (RPKPGGWNTG…THNQWNKPSK (80 aa)) form a disordered region. 5 consecutive repeat copies span residues 51-59 (PQGGGTWGQ), 60-67 (PHGGGWGQ), 68-75 (PHGGGWGQ), 76-83 (PHGGGWGQ), and 84-91 (PHGGGWGQ). The segment at 51–91 (PQGGGTWGQPHGGGWGQPHGGGWGQPHGGGWGQPHGGGWGQ) is 5 X 8 AA tandem repeats of P-H-G-G-G-W-G-Q. Residues 52–95 (QGGGTWGQPHGGGWGQPHGGGWGQPHGGGWGQPHGGGWGQGGGT) are compositionally biased toward gly residues. Residues H61, G62, G63, H69, G70, G71, H77, G78, G79, H85, G86, and G87 each coordinate Cu(2+). The tract at residues 90–231 (GQGGGTHNQW…SQAYYDGRRS (142 aa)) is prP27-30 (protease resistant core). The cysteines at positions 179 and 214 are disulfide-linked. 2 N-linked (GlcNAc...) asparagine glycosylation sites follow: N181 and N197. S231 carries the GPI-anchor amidated serine lipid modification. Residues 232–254 (SAVLFSSPPVILLISFLIFLIVG) constitute a propeptide, removed in mature form.

Belongs to the prion family. As to quaternary structure, monomer and homodimer. Has a tendency to aggregate into amyloid fibrils containing a cross-beta spine, formed by a steric zipper of superposed beta-strands. Soluble oligomers may represent an intermediate stage on the path to fibril formation. Copper binding may promote oligomerization. Interacts with GRB2, APP, ERI3/PRNPIP and SYN1. Mislocalized cytosolically exposed PrP interacts with MGRN1; this interaction alters MGRN1 subcellular location and causes lysosomal enlargement. Interacts with KIAA1191.

Its subcellular location is the cell membrane. The protein localises to the golgi apparatus. Functionally, its primary physiological function is unclear. Has cytoprotective activity against internal or environmental stresses. May play a role in neuronal development and synaptic plasticity. May be required for neuronal myelin sheath maintenance. May play a role in iron uptake and iron homeostasis. Soluble oligomers are toxic to cultured neuroblastoma cells and induce apoptosis (in vitro). Association with GPC1 (via its heparan sulfate chains) targets PRNP to lipid rafts. Also provides Cu(2+) or Zn(2+) for the ascorbate-mediated GPC1 deaminase degradation of its heparan sulfate side chains. This is Major prion protein (PRNP) from Cricetulus griseus (Chinese hamster).